Reading from the N-terminus, the 345-residue chain is Histidinol-phosphate aminotransferase (345 aa).

An N6-(pyridoxal phosphate)lysine modification is found at Lys-205.

It belongs to the class-II pyridoxal-phosphate-dependent aminotransferase family. Histidinol-phosphate aminotransferase subfamily. In terms of assembly, homodimer. It depends on pyridoxal 5'-phosphate as a cofactor.

The enzyme catalyses L-histidinol phosphate + 2-oxoglutarate = 3-(imidazol-4-yl)-2-oxopropyl phosphate + L-glutamate. It participates in amino-acid biosynthesis; L-histidine biosynthesis; L-histidine from 5-phospho-alpha-D-ribose 1-diphosphate: step 7/9. This Parabacteroides distasonis (strain ATCC 8503 / DSM 20701 / CIP 104284 / JCM 5825 / NCTC 11152) protein is Histidinol-phosphate aminotransferase.